Consider the following 147-residue polypeptide: Small ribosomal subunit protein uS13 (147 aa).

The disordered stretch occupies residues 115-147 (SYKGRRHEAGLPVRGQRTKSTFRNSSSVGVKRS). Polar residues predominate over residues 132–147 (TKSTFRNSSSVGVKRS).

It belongs to the universal ribosomal protein uS13 family. As to quaternary structure, part of the 30S ribosomal subunit. Forms a loose heterodimer with protein S19. Forms two bridges to the 50S subunit in the 70S ribosome.

In terms of biological role, located at the top of the head of the 30S subunit, it contacts several helices of the 16S rRNA. In the 70S ribosome it contacts the 23S rRNA (bridge B1a) and protein L5 of the 50S subunit (bridge B1b), connecting the 2 subunits; these bridges are implicated in subunit movement. The protein is Small ribosomal subunit protein uS13 of Methanobrevibacter smithii (strain ATCC 35061 / DSM 861 / OCM 144 / PS).